The following is a 742-amino-acid chain: Pyriculol/pyriculariol biosynthesis cluster transcription factor 1 (742 aa).

The segment at residues 23 to 49 is a DNA-binding region (zn(2)-C6 fungal-type); the sequence is CVLCQHRKIKCDRSFPCANCQRANVQC. The interval 85-116 is disordered; the sequence is GKPDIARLTTKRSSLSQSPPKGEEPLPEWNRH. Positions 105–116 are enriched in basic and acidic residues; that stretch reads KGEEPLPEWNRH.

It localises to the nucleus. Transcriptional regulator; part of the gene cluster that mediates the biosynthesis of pyriculol and pyriculariol, two heptaketides that induce lesion formation upon application on rice leaves but are dispensable for pathogenicity. With TRF2, negatively regulates the expression of the gene cluster and the subsequent pyriculol and pyriculariol production. This is Pyriculol/pyriculariol biosynthesis cluster transcription factor 1 from Pyricularia oryzae (strain 70-15 / ATCC MYA-4617 / FGSC 8958) (Rice blast fungus).